Here is a 295-residue protein sequence, read N- to C-terminus: bZIP transcription factor RISBZ5 (295 aa).

A compositionally biased stretch (basic and acidic residues) spans 16 to 26 (REEAGAGDRKP). The disordered stretch occupies residues 16-157 (REEAGAGDRK…ARRSRRRKQA (142 aa)). Residues 109–119 (SDSDSDCDSLL) show a composition bias toward acidic residues. The span at 120-136 (EAERSPRLRGTKSTETK) shows a compositional bias: basic and acidic residues. The bZIP domain occupies 134–197 (ETKRIRRMVS…NTAVTDNRIL (64 aa)). The segment at 136–155 (KRIRRMVSNRESARRSRRRK) is basic motif. Residues 162 to 176 (LESQVEQLKGENSSL) form a leucine-zipper region.

Homodimer.

It localises to the nucleus. Functionally, probable transcription factor that binds to the DNA specific sequence 5'-TGAGTCA-3' found in seed storage protein gene promoters. May function as a negative regulator in cold and drought stress responses. The chain is bZIP transcription factor RISBZ5 from Oryza sativa subsp. japonica (Rice).